Consider the following 47-residue polypeptide: Delta-actitoxin-Aspp1b (47 aa).

Cystine bridges form between Cys4–Cys44, Cys6–Cys34, and Cys27–Cys45.

It belongs to the sea anemone sodium channel inhibitory toxin family. Type I subfamily.

The protein resides in the secreted. The protein localises to the nematocyst. Functionally, binds specifically to voltage-gated sodium channels (Nav), thereby delaying their inactivation during signal transduction. Has a longer mammalian heart stimulation effect than Hk2a, Hk8a and Hk16a. This is Delta-actitoxin-Aspp1b from Anthopleura sp. (strain 'Zhanjiang') (Sea anemone).